Consider the following 62-residue polypeptide: Conotoxin Lt5.5 (62 aa).

Positions 1-22 (MRCLQVFIIFLLLIPSPPSVDA) are cleaved as a signal peptide. Positions 23-48 (QRKTKDDVPLASFHDNAKRTLKRLWN) are excised as a propeptide.

Belongs to the conotoxin T superfamily. Post-translationally, contains 2 disulfide bonds that can be either 'C1-C3, C2-C4' or 'C1-C4, C2-C3', since these disulfide connectivities have been observed for conotoxins with cysteine framework V (for examples, see AC P0DQQ7 and AC P81755). As to expression, expressed by the venom duct.

The protein resides in the secreted. This chain is Conotoxin Lt5.5, found in Conus litteratus (Lettered cone).